The following is a 944-amino-acid chain: MGPKTLPQLAGKWQVLCMLSLCCWGWVSGQLRYSVVEESEPGTLVGNVAQDLGLKMTDLLSRRLQLGSEENGRYFSLSLMSGALAVNQKIDRESLCGASTSCLLPVQVVTEHPLELIRVEVEILDLNDNSPSFATPEREMRISESAASGARFPLDSAQDPDVGTNTVSFYTLSPNSHFSLNVKTLKDGKPFPELVLEQQLDREAQARHQLVLTAVDGGTPARSGTTLISVIVLDINDNAPTFQSSVLRVGIPENAPIGTLLLRLNATDPDEGTNGQLDYSFGDHTSEAVRNLFGLDPSSGAIHVLGPIDFEESRFYEIHARARDQGQPAMEGHCVIQVEVGDVNDNAPEVLLASLANPVLESTPVGTVVGLFNVRDRDSGRNGEVSLDISPDLPFQIKPSENHYSLLTSQPLDREATSHYIIELLASDAGSPSLHKHLTIRLNISDVNDNAPRFNQQLYTAYILENRPPGSLLCTVAASDPDTGDNARLTYSVVGNQVQGAPASSFVYVNPEDGRVFAQRTFDYELLQMLQIVVGVRDSGSPPLHANTSLHVFVLDENDNAPAVLHPRPGWEHSAPQRLPRSAPPGSLVTKVTAVDADAGHNAWLSYSLLPQSTAPGLFLVSTHTGEVRTARALLEDDSDTQQVVVLVRDNGDPSLSSTATVLLVLEDEDPEEMPKSSDFLIHPPERSDLTLYLIVALATVSLLSLVTFTFLSAKCLQGNADGDGGGGQCCRRQDSPSPDFYKQSSPNLQVSSDGTLKYMEVTLRPTDSQSHCYRTCFSPASDGSDFTFLRPLSVQQPTALALEPDAIRSRSNTLRERSQQAPPNTDWRFSQAQRPGTSGSQNGDDTGTWPNNQFDTEMLQAMILASASEAADGSSTLGGGAGTMGLSARYGPQFTLQHVPDYRQNVYIPGSNATLTNAAGKRDGKAPAGGNGNKKKSGKKEKK.

Positions 1–29 (MGPKTLPQLAGKWQVLCMLSLCCWGWVSG) are cleaved as a signal peptide. Cadherin domains lie at 30-133 (QLRY…SPSF), 134-242 (ATPE…APTF), 243-350 (QSSV…APEV), 351-454 (LLAS…APRF), 455-564 (NQQL…APAV), and 571-677 (WEHS…MPKS). The Extracellular portion of the chain corresponds to 30–693 (QLRYSVVEES…PPERSDLTLY (664 aa)). N-linked (GlcNAc...) asparagine glycosylation is found at Asn265, Asn443, and Asn547. A helical membrane pass occupies residues 694–714 (LIVALATVSLLSLVTFTFLSA). At 715 to 944 (KCLQGNADGD…KKKSGKKEKK (230 aa)) the chain is on the cytoplasmic side. 3 disordered regions span residues 722 to 747 (DGDGGGGQCCRRQDSPSPDFYKQSSP), 812 to 853 (SNTL…WPNN), and 914 to 944 (ATLTNAAGKRDGKAPAGGNGNKKKSGKKEKK). A compositionally biased stretch (polar residues) spans 820–853 (QQAPPNTDWRFSQAQRPGTSGSQNGDDTGTWPNN). The segment covering 934–944 (NKKKSGKKEKK) has biased composition (basic residues).

The protein localises to the cell membrane. Functionally, potential calcium-dependent cell-adhesion protein. May be involved in the establishment and maintenance of specific neuronal connections in the brain. In Pan troglodytes (Chimpanzee), this protein is Protocadherin gamma-C5 (PCDHGC5).